The following is a 209-amino-acid chain: Methylthioribulose-1-phosphate dehydratase (209 aa).

His99 and His101 together coordinate Zn(2+).

It belongs to the aldolase class II family. MtnB subfamily. It depends on Zn(2+) as a cofactor.

The enzyme catalyses 5-(methylsulfanyl)-D-ribulose 1-phosphate = 5-methylsulfanyl-2,3-dioxopentyl phosphate + H2O. Its pathway is amino-acid biosynthesis; L-methionine biosynthesis via salvage pathway; L-methionine from S-methyl-5-thio-alpha-D-ribose 1-phosphate: step 2/6. Catalyzes the dehydration of methylthioribulose-1-phosphate (MTRu-1-P) into 2,3-diketo-5-methylthiopentyl-1-phosphate (DK-MTP-1-P). The sequence is that of Methylthioribulose-1-phosphate dehydratase from Leptospira biflexa serovar Patoc (strain Patoc 1 / Ames).